The chain runs to 299 residues: GTP cyclohydrolase FolE2 (299 aa).

The protein belongs to the GTP cyclohydrolase IV family.

The enzyme catalyses GTP + H2O = 7,8-dihydroneopterin 3'-triphosphate + formate + H(+). It participates in cofactor biosynthesis; 7,8-dihydroneopterin triphosphate biosynthesis; 7,8-dihydroneopterin triphosphate from GTP: step 1/1. Converts GTP to 7,8-dihydroneopterin triphosphate. This is GTP cyclohydrolase FolE2 from Citrobacter koseri (strain ATCC BAA-895 / CDC 4225-83 / SGSC4696).